A 122-amino-acid chain; its full sequence is Large ribosomal subunit protein uL14 (122 aa).

This sequence belongs to the universal ribosomal protein uL14 family. As to quaternary structure, part of the 50S ribosomal subunit. Forms a cluster with proteins L3 and L19. In the 70S ribosome, L14 and L19 interact and together make contacts with the 16S rRNA in bridges B5 and B8.

Its function is as follows. Binds to 23S rRNA. Forms part of two intersubunit bridges in the 70S ribosome. In Oenococcus oeni (strain ATCC BAA-331 / PSU-1), this protein is Large ribosomal subunit protein uL14.